The primary structure comprises 354 residues: Uroporphyrinogen decarboxylase (354 aa).

Substrate-binding positions include 27 to 31, Asp77, Tyr154, Ser209, and His327; that span reads RQAGR.

Belongs to the uroporphyrinogen decarboxylase family. In terms of assembly, homodimer.

It localises to the cytoplasm. It catalyses the reaction uroporphyrinogen III + 4 H(+) = coproporphyrinogen III + 4 CO2. It functions in the pathway porphyrin-containing compound metabolism; protoporphyrin-IX biosynthesis; coproporphyrinogen-III from 5-aminolevulinate: step 4/4. Its function is as follows. Catalyzes the decarboxylation of four acetate groups of uroporphyrinogen-III to yield coproporphyrinogen-III. The polypeptide is Uroporphyrinogen decarboxylase (Shewanella putrefaciens (strain CN-32 / ATCC BAA-453)).